A 118-amino-acid chain; its full sequence is Small ribosomal subunit protein uS13 (118 aa).

The disordered stretch occupies residues 92–118 (RRGLPVRGQRTKTNARTRKGPRKPIKK).

The protein belongs to the universal ribosomal protein uS13 family. Part of the 30S ribosomal subunit. Forms a loose heterodimer with protein S19. Forms two bridges to the 50S subunit in the 70S ribosome.

Functionally, located at the top of the head of the 30S subunit, it contacts several helices of the 16S rRNA. In the 70S ribosome it contacts the 23S rRNA (bridge B1a) and protein L5 of the 50S subunit (bridge B1b), connecting the 2 subunits; these bridges are implicated in subunit movement. Contacts the tRNAs in the A and P-sites. The polypeptide is Small ribosomal subunit protein uS13 (Yersinia enterocolitica serotype O:8 / biotype 1B (strain NCTC 13174 / 8081)).